The chain runs to 309 residues: PI-PLC X domain-containing protein 1 (309 aa).

Residues 17–193 form the PI-PLC X-box domain; that stretch reads HMWDIPLWNL…QVILSYDDES (177 aa).

The chain is PI-PLC X domain-containing protein 1 (plcxd1) from Danio rerio (Zebrafish).